A 282-amino-acid chain; its full sequence is uncharacterized protein (282 aa).

Residues 205 to 277 (LAQQRRVYAQ…DELQNKARDA (73 aa)) are a coiled coil.

This is an uncharacterized protein from Treponema pallidum (strain Nichols).